Consider the following 70-residue polypeptide: ATP synthase subunit c (70 aa).

A run of 2 helical transmembrane segments spans residues 3-23 (FIAASIAAGIAAFGASIGNGM) and 47-67 (FIGVGLIEAVPILSVVVAFML).

The protein belongs to the ATPase C chain family. As to quaternary structure, F-type ATPases have 2 components, F(1) - the catalytic core - and F(0) - the membrane proton channel. F(1) has five subunits: alpha(3), beta(3), gamma(1), delta(1), epsilon(1). F(0) has three main subunits: a(1), b(2) and c(10-14). The alpha and beta chains form an alternating ring which encloses part of the gamma chain. F(1) is attached to F(0) by a central stalk formed by the gamma and epsilon chains, while a peripheral stalk is formed by the delta and b chains.

Its subcellular location is the cell membrane. Functionally, f(1)F(0) ATP synthase produces ATP from ADP in the presence of a proton or sodium gradient. F-type ATPases consist of two structural domains, F(1) containing the extramembraneous catalytic core and F(0) containing the membrane proton channel, linked together by a central stalk and a peripheral stalk. During catalysis, ATP synthesis in the catalytic domain of F(1) is coupled via a rotary mechanism of the central stalk subunits to proton translocation. In terms of biological role, key component of the F(0) channel; it plays a direct role in translocation across the membrane. A homomeric c-ring of between 10-14 subunits forms the central stalk rotor element with the F(1) delta and epsilon subunits. The protein is ATP synthase subunit c of Lacticaseibacillus casei (strain BL23) (Lactobacillus casei).